Here is a 1126-residue protein sequence, read N- to C-terminus: [F-actin]-monooxygenase mical2 (1126 aa).

Positions 2–494 (GENGDDKHGR…KHLFITNELQ (493 aa)) are monooxygenase domain. FAD contacts are provided by residues Cys-97, 116–118 (EKR), 123–125 (RNN), Phe-183, Tyr-299, and Asp-399. In terms of domain architecture, Calponin-homology (CH) spans 516–619 (DVRPNKLLIW…MVLYLSKFYE (104 aa)). Residues 659–680 (RKRVPKDEKTSDDSDLNKRRKT) carry the Nuclear localization signal motif. Disordered stretches follow at residues 748-830 (AVTA…SLSS) and 892-935 (PSLG…SGMS). Residues 792 to 803 (VRPPVQPRPGPA) show a composition bias toward pro residues. Residues 805 to 824 (PTRELRVVERAQSHPDDLGR) are compositionally biased toward basic and acidic residues. The segment covering 918 to 932 (SSSDSSPSSAPSRKS) has biased composition (low complexity). The LIM zinc-binding domain maps to 1001-1063 (DTCYFCKRRV…QPHFMHSVTK (63 aa)). Zn(2+)-binding residues include Cys-1003, Cys-1006, His-1024, Cys-1027, Cys-1030, Cys-1033, Cys-1053, and His-1056.

The protein belongs to the Mical family. FAD serves as cofactor.

The protein resides in the nucleus. The protein localises to the cytoplasm. The enzyme catalyses L-methionyl-[F-actin] + NADPH + O2 + H(+) = L-methionyl-(R)-S-oxide-[F-actin] + NADP(+) + H2O. Functionally, nuclear monooxygenase that promotes depolymerization of F-actin by mediating oxidation of specific methionine residues on actin and regulates the srf signaling. Acts by modifying nuclear actin subunits through the addition of oxygen to form methionine-sulfoxide, leading to promote actin filament severing and prevent repolymerization. Acts as a key regulator of the srf signaling pathway elicited by nerve growth factor and serum: mediates oxidation and subsequent depolymerization of nuclear actin, leading to increase mkl1/mrtf-a presence in the nucleus and promote srf:mkl1/mrtf-a-dependent gene transcription. The chain is [F-actin]-monooxygenase mical2 from Xenopus tropicalis (Western clawed frog).